The chain runs to 349 residues: Glycerol-3-phosphate dehydrogenase [NAD(+)], cytoplasmic (349 aa).

G10 to G15 lines the NAD(+) pocket. K120 contacts substrate. A153 is an NAD(+) binding site. K204 functions as the Proton acceptor in the catalytic mechanism. R269 provides a ligand contact to NAD(+). Residue R269–N270 coordinates substrate. Position 289 is an N6-succinyllysine (K289). The NAD(+) site is built by K296 and Q298. A Phosphotyrosine modification is found at Y326.

The protein belongs to the NAD-dependent glycerol-3-phosphate dehydrogenase family. Homodimer.

The protein resides in the cytoplasm. It carries out the reaction sn-glycerol 3-phosphate + NAD(+) = dihydroxyacetone phosphate + NADH + H(+). In terms of biological role, has glycerol-3-phosphate dehydrogenase activity. The protein is Glycerol-3-phosphate dehydrogenase [NAD(+)], cytoplasmic (GPD1) of Bos taurus (Bovine).